Reading from the N-terminus, the 137-residue chain is MGVRKRETADARKEANKSIAFAKLNNCPTSPRKMRLVADLVRGQKVERALNILRFSSKEASRKLEKLLLSAINNWEQKNSEGNLEEAGLFVKEIRVDGGMMLKRLRPAPQGRAHRIRKRSNHVTIVLGAINNTQSNS.

The protein belongs to the universal ribosomal protein uL22 family. Part of the 50S ribosomal subunit.

Functionally, this protein binds specifically to 23S rRNA; its binding is stimulated by other ribosomal proteins, e.g. L4, L17, and L20. It is important during the early stages of 50S assembly. It makes multiple contacts with different domains of the 23S rRNA in the assembled 50S subunit and ribosome. The globular domain of the protein is located near the polypeptide exit tunnel on the outside of the subunit, while an extended beta-hairpin is found that lines the wall of the exit tunnel in the center of the 70S ribosome. The chain is Large ribosomal subunit protein uL22 from Flavobacterium johnsoniae (strain ATCC 17061 / DSM 2064 / JCM 8514 / BCRC 14874 / CCUG 350202 / NBRC 14942 / NCIMB 11054 / UW101) (Cytophaga johnsonae).